Reading from the N-terminus, the 275-residue chain is Elongation factor Ts (275 aa).

Residues 76-79 (TDFV) are involved in Mg(2+) ion dislocation from EF-Tu.

It belongs to the EF-Ts family.

Its subcellular location is the cytoplasm. Its function is as follows. Associates with the EF-Tu.GDP complex and induces the exchange of GDP to GTP. It remains bound to the aminoacyl-tRNA.EF-Tu.GTP complex up to the GTP hydrolysis stage on the ribosome. In Rhodococcus opacus (strain B4), this protein is Elongation factor Ts.